The primary structure comprises 417 residues: Lipoyl synthase, mitochondrial (417 aa).

A mitochondrion-targeting transit peptide spans 1 to 30 (MATSIPRSRCFLTSSTLKVVPRSRTPLRSF). Residues 23–62 (SRTPLRSFATTSDTPQTSVPEAPGKRSRPPTSFSDTLNAG) form a disordered region. Composition is skewed to polar residues over residues 30–41 (FATTSDTPQTSV) and 51–61 (PPTSFSDTLNA). [4Fe-4S] cluster contacts are provided by Cys-132, Cys-137, Cys-143, Cys-163, Cys-167, Cys-170, and Ser-378. The Radical SAM core domain maps to 146–367 (GSSKSAATAT…RQRALDMGFL (222 aa)).

The protein belongs to the radical SAM superfamily. Lipoyl synthase family. [4Fe-4S] cluster serves as cofactor.

It localises to the mitochondrion. It carries out the reaction [[Fe-S] cluster scaffold protein carrying a second [4Fe-4S](2+) cluster] + N(6)-octanoyl-L-lysyl-[protein] + 2 oxidized [2Fe-2S]-[ferredoxin] + 2 S-adenosyl-L-methionine + 4 H(+) = [[Fe-S] cluster scaffold protein] + N(6)-[(R)-dihydrolipoyl]-L-lysyl-[protein] + 4 Fe(3+) + 2 hydrogen sulfide + 2 5'-deoxyadenosine + 2 L-methionine + 2 reduced [2Fe-2S]-[ferredoxin]. It functions in the pathway protein modification; protein lipoylation via endogenous pathway; protein N(6)-(lipoyl)lysine from octanoyl-[acyl-carrier-protein]: step 2/2. Functionally, catalyzes the radical-mediated insertion of two sulfur atoms into the C-6 and C-8 positions of the octanoyl moiety bound to the lipoyl domains of lipoate-dependent enzymes, thereby converting the octanoylated domains into lipoylated derivatives. The polypeptide is Lipoyl synthase, mitochondrial (Pyrenophora tritici-repentis (strain Pt-1C-BFP) (Wheat tan spot fungus)).